The chain runs to 327 residues: Cobalamin biosynthesis protein CobD (327 aa).

The next 4 helical transmembrane spans lie at 61-78 (MWLTVGLVAACIFAGLVI), 80-102 (SILPHAGTAGAIVEVVIVAILLA), 160-182 (GIVAPAFWFLVGGLPGLFAYKLI), and 300-322 (AALVLFWSTMSLMTGLVIAASLV).

It belongs to the CobD/CbiB family.

The protein resides in the cell membrane. The protein operates within cofactor biosynthesis; adenosylcobalamin biosynthesis. Converts cobyric acid to cobinamide by the addition of aminopropanol on the F carboxylic group. The polypeptide is Cobalamin biosynthesis protein CobD (Brucella suis biovar 1 (strain 1330)).